Here is a 535-residue protein sequence, read N- to C-terminus: Putative beta-glucosidase 41 (535 aa).

Positions 1–27 are cleaved as a signal peptide; the sequence is MESLMRLVLVLFPFFVVFFVPLDHVSS. Gln-49 contacts a beta-D-glucoside. N-linked (GlcNAc...) asparagine glycosylation occurs at Asn-118. A beta-D-glucoside contacts are provided by residues His-151 and 196 to 197; that span reads NE. Glu-197 functions as the Proton donor in the catalytic mechanism. The cysteines at positions 216 and 224 are disulfide-linked. Tyr-340 and Glu-413 together coordinate a beta-D-glucoside. Glu-413 acts as the Nucleophile in catalysis. A glycan (N-linked (GlcNAc...) asparagine) is linked at Asn-445. A beta-D-glucoside is bound by residues Trp-463, 470–471, and Phe-479; that span reads EW. Asn-489 is a glycosylation site (N-linked (GlcNAc...) asparagine).

The protein belongs to the glycosyl hydrolase 1 family.

It catalyses the reaction Hydrolysis of terminal, non-reducing beta-D-glucosyl residues with release of beta-D-glucose.. The protein is Putative beta-glucosidase 41 of Arabidopsis thaliana (Mouse-ear cress).